Reading from the N-terminus, the 475-residue chain is MAILQNSRQSHKQLPIISQTIRSAWCQQRPINAMHQDVRQKSIGSGNETKLEAKETEVPTNRRRRRRRCSSSSTSDSSASSYSSTDSDSGSSTSSSSIRSQLPALNLPVPLPLATPTPPAVSSPHQAPSPRRNSSDSNRSVSPVEVPVDPHAWTPEDIASWVRWATRKFKLDPEPDIDRFPKDAQELCDLSRADFWVCAGSRRGGMLLAQHFAISLYHATGRETSPMLNDDEPNPYQLLNAASHRLVAQGSGGQIQLWQFLLELLADSSNANAISWEGQSGEFRLIDPDEVARRWGERKAKPNMNYDKLSRALRYYYDKNIMTKVHGKRYAYKFDFHGLMAACQAQAQGGDPASSMLGSYNHHAGGAMQLGRHPPPLHHHPQHSHPHHQLGQPHFLHPHHSSPASNSSSLGFPSSSTASSQASPGQAPASSSASTSNFTAPFQGGTAGVDPARTSTSSAGNYDQGPVTPTTNAFN.

The disordered stretch occupies residues 42-150 (SIGSGNETKL…VSPVEVPVDP (109 aa)). The segment covering 70–108 (SSSSTSDSSASSYSSTDSDSGSSTSSSSIRSQLPALNLP) has biased composition (low complexity). The segment covering 109–121 (VPLPLATPTPPAV) has biased composition (pro residues). Positions 122 to 144 (SSPHQAPSPRRNSSDSNRSVSPV) are enriched in low complexity. A PNT domain is found at 132–219 (RNSSDSNRSV…QHFAISLYHA (88 aa)). The ETS DNA-binding region spans 255-335 (IQLWQFLLEL…HGKRYAYKFD (81 aa)). Positions 350–475 (GDPASSMLGS…PVTPTTNAFN (126 aa)) are disordered. Residues 375-388 (PPLHHHPQHSHPHH) show a composition bias toward basic residues. The span at 401-436 (SSPASNSSSLGFPSSSTASSQASPGQAPASSSASTS) shows a compositional bias: low complexity. Positions 453 to 475 (RTSTSSAGNYDQGPVTPTTNAFN) are enriched in polar residues.

This sequence belongs to the ETS family. Embryonic ventral nervous system and 1 pair of neurons in each thoracic segment.

The protein localises to the nucleus. The protein is DNA-binding protein D-ETS-6 (Ets21C) of Drosophila melanogaster (Fruit fly).